A 169-amino-acid polypeptide reads, in one-letter code: Probable inosine/xanthosine triphosphatase (169 aa).

Residue aspartate 58 coordinates Mg(2+).

Belongs to the YjjX NTPase family. In terms of assembly, homodimer. Mg(2+) serves as cofactor. It depends on Mn(2+) as a cofactor.

It catalyses the reaction XTP + H2O = XDP + phosphate + H(+). The catalysed reaction is ITP + H2O = IDP + phosphate + H(+). Phosphatase that hydrolyzes non-canonical purine nucleotides such as XTP and ITP to their respective diphosphate derivatives. Probably excludes non-canonical purines from DNA/RNA precursor pool, thus preventing their incorporation into DNA/RNA and avoiding chromosomal lesions. The protein is Probable inosine/xanthosine triphosphatase of Archaeoglobus fulgidus (strain ATCC 49558 / DSM 4304 / JCM 9628 / NBRC 100126 / VC-16).